We begin with the raw amino-acid sequence, 74 residues long: Translation initiation factor IF-1 (74 aa).

Residues methionine 1 to arginine 72 enclose the S1-like domain.

The protein belongs to the IF-1 family. Component of the 30S ribosomal translation pre-initiation complex which assembles on the 30S ribosome in the order IF-2 and IF-3, IF-1 and N-formylmethionyl-tRNA(fMet); mRNA recruitment can occur at any time during PIC assembly.

It localises to the cytoplasm. One of the essential components for the initiation of protein synthesis. Stabilizes the binding of IF-2 and IF-3 on the 30S subunit to which N-formylmethionyl-tRNA(fMet) subsequently binds. Helps modulate mRNA selection, yielding the 30S pre-initiation complex (PIC). Upon addition of the 50S ribosomal subunit IF-1, IF-2 and IF-3 are released leaving the mature 70S translation initiation complex. This chain is Translation initiation factor IF-1, found in Trichodesmium erythraeum (strain IMS101).